Reading from the N-terminus, the 395-residue chain is NAD(P)H-quinone oxidoreductase subunit H, chloroplastic (395 aa).

This sequence belongs to the complex I 49 kDa subunit family. NDH is composed of at least 16 different subunits, 5 of which are encoded in the nucleus.

It is found in the plastid. Its subcellular location is the chloroplast thylakoid membrane. The catalysed reaction is a plastoquinone + NADH + (n+1) H(+)(in) = a plastoquinol + NAD(+) + n H(+)(out). It catalyses the reaction a plastoquinone + NADPH + (n+1) H(+)(in) = a plastoquinol + NADP(+) + n H(+)(out). Its function is as follows. NDH shuttles electrons from NAD(P)H:plastoquinone, via FMN and iron-sulfur (Fe-S) centers, to quinones in the photosynthetic chain and possibly in a chloroplast respiratory chain. The immediate electron acceptor for the enzyme in this species is believed to be plastoquinone. Couples the redox reaction to proton translocation, and thus conserves the redox energy in a proton gradient. This chain is NAD(P)H-quinone oxidoreductase subunit H, chloroplastic, found in Chloranthus spicatus (Chulantree).